We begin with the raw amino-acid sequence, 529 residues long: Peptide chain release factor 3 (529 aa).

The 270-residue stretch at 11–280 (AKRRTFAIIS…GLVEWAPAPM (270 aa)) folds into the tr-type G domain. Residues 20–27 (SHPDAGKT), 88–92 (DTPGH), and 142–145 (NKLD) each bind GTP.

Belongs to the TRAFAC class translation factor GTPase superfamily. Classic translation factor GTPase family. PrfC subfamily.

Its subcellular location is the cytoplasm. Increases the formation of ribosomal termination complexes and stimulates activities of RF-1 and RF-2. It binds guanine nucleotides and has strong preference for UGA stop codons. It may interact directly with the ribosome. The stimulation of RF-1 and RF-2 is significantly reduced by GTP and GDP, but not by GMP. In Citrobacter koseri (strain ATCC BAA-895 / CDC 4225-83 / SGSC4696), this protein is Peptide chain release factor 3.